Reading from the N-terminus, the 736-residue chain is 1,4-alpha-glucan branching enzyme GlgB 2 (736 aa).

Aspartate 415 (nucleophile) is an active-site residue. The Proton donor role is filled by glutamate 468.

Belongs to the glycosyl hydrolase 13 family. GlgB subfamily. Monomer.

The catalysed reaction is Transfers a segment of a (1-&gt;4)-alpha-D-glucan chain to a primary hydroxy group in a similar glucan chain.. It functions in the pathway glycan biosynthesis; glycogen biosynthesis. Its function is as follows. Catalyzes the formation of the alpha-1,6-glucosidic linkages in glycogen by scission of a 1,4-alpha-linked oligosaccharide from growing alpha-1,4-glucan chains and the subsequent attachment of the oligosaccharide to the alpha-1,6 position. This Rhizobium johnstonii (strain DSM 114642 / LMG 32736 / 3841) (Rhizobium leguminosarum bv. viciae) protein is 1,4-alpha-glucan branching enzyme GlgB 2.